We begin with the raw amino-acid sequence, 1289 residues long: SH3 domain and tetratricopeptide repeat-containing protein 2 (1289 aa).

2 consecutive SH3 domains span residues 176–239 (EGHF…PLPV) and 267–330 (IGRG…LDSC). The interval 393-442 (SQPEGFREARSGGTWMERQTIGSRRSSGSGDSSPEEDELISASSDSYHLP) is disordered. Positions 414–424 (GSRRSSGSGDS) are enriched in low complexity. TPR repeat units follow at residues 529 to 562 (ARLC…LDGA), 758 to 791 (RTLC…GKLL), 837 to 870 (GVVH…AREM), 1002 to 1038 (GQLL…FVDL), 1085 to 1119 (LKLY…LARR), 1120 to 1153 (MKAL…ATLA), 1167 to 1200 (LVAF…CPPW), and 1211 to 1245 (AKVY…AVLM).

In Mus musculus (Mouse), this protein is SH3 domain and tetratricopeptide repeat-containing protein 2 (Sh3tc2).